The following is a 239-amino-acid chain: Uridylate kinase (239 aa).

13–16 (KVSG) is an ATP binding site. UMP is bound at residue Gly-55. 2 residues coordinate ATP: Gly-56 and Arg-60. UMP-binding positions include Asp-75 and 136–143 (TGNPFCTT). ATP-binding residues include Thr-163, Gln-164, Tyr-169, and Asp-172.

It belongs to the UMP kinase family. Homohexamer.

It is found in the cytoplasm. The enzyme catalyses UMP + ATP = UDP + ADP. It participates in pyrimidine metabolism; CTP biosynthesis via de novo pathway; UDP from UMP (UMPK route): step 1/1. Inhibited by UTP. In terms of biological role, catalyzes the reversible phosphorylation of UMP to UDP. The protein is Uridylate kinase of Rickettsia bellii (strain RML369-C).